Reading from the N-terminus, the 157-residue chain is Arginine repressor (157 aa).

Belongs to the ArgR family.

The protein resides in the cytoplasm. The protein operates within amino-acid biosynthesis; L-arginine biosynthesis [regulation]. Its function is as follows. Regulates arginine biosynthesis genes. In Deinococcus deserti (strain DSM 17065 / CIP 109153 / LMG 22923 / VCD115), this protein is Arginine repressor.